Here is a 260-residue protein sequence, read N- to C-terminus: UPF0246 protein Bxeno_A1262 (260 aa).

The protein belongs to the UPF0246 family.

The sequence is that of UPF0246 protein Bxeno_A1262 from Paraburkholderia xenovorans (strain LB400).